The primary structure comprises 312 residues: Ribosomal RNA small subunit methyltransferase H (312 aa).

Residues 34–36, D54, F81, D102, and Q109 each bind S-adenosyl-L-methionine; that span reads AGH.

The protein belongs to the methyltransferase superfamily. RsmH family.

The protein localises to the cytoplasm. The enzyme catalyses cytidine(1402) in 16S rRNA + S-adenosyl-L-methionine = N(4)-methylcytidine(1402) in 16S rRNA + S-adenosyl-L-homocysteine + H(+). Specifically methylates the N4 position of cytidine in position 1402 (C1402) of 16S rRNA. In Geotalea daltonii (strain DSM 22248 / JCM 15807 / FRC-32) (Geobacter daltonii), this protein is Ribosomal RNA small subunit methyltransferase H.